The chain runs to 521 residues: Bifunctional purine biosynthesis protein PurH (521 aa).

The MGS-like domain maps to methionine 1–valine 145.

Belongs to the PurH family.

The enzyme catalyses (6R)-10-formyltetrahydrofolate + 5-amino-1-(5-phospho-beta-D-ribosyl)imidazole-4-carboxamide = 5-formamido-1-(5-phospho-D-ribosyl)imidazole-4-carboxamide + (6S)-5,6,7,8-tetrahydrofolate. It carries out the reaction IMP + H2O = 5-formamido-1-(5-phospho-D-ribosyl)imidazole-4-carboxamide. The protein operates within purine metabolism; IMP biosynthesis via de novo pathway; 5-formamido-1-(5-phospho-D-ribosyl)imidazole-4-carboxamide from 5-amino-1-(5-phospho-D-ribosyl)imidazole-4-carboxamide (10-formyl THF route): step 1/1. It functions in the pathway purine metabolism; IMP biosynthesis via de novo pathway; IMP from 5-formamido-1-(5-phospho-D-ribosyl)imidazole-4-carboxamide: step 1/1. This is Bifunctional purine biosynthesis protein PurH from Paraburkholderia phymatum (strain DSM 17167 / CIP 108236 / LMG 21445 / STM815) (Burkholderia phymatum).